The primary structure comprises 458 residues: Cell death abnormality protein 8 (458 aa).

Topologically, residues 1–45 are cytoplasmic; that stretch reads MFLKKHKSKLLLVPRDEEQEDAGIVAVLTDRIPSVLLVRWFDLFC. A helical transmembrane segment spans residues 46–66; that stretch reads FGFAMCSYALDFFSDIGIAIF. Over 67 to 77 the chain is Extracellular; it reads HFWAGRYLSGS. A helical membrane pass occupies residues 78 to 98; sequence LVLAFALLPSVIINIISMVWM. At 99–123 the chain is on the cytoplasmic side; that stretch reads LDDEMHWKRRAHPRRTGTFELNQKR. The helical transmembrane segment at 124–144 threads the bilayer; sequence FIPLSKMIVLCICQMGPLFWY. The Extracellular segment spans residues 145–219; that stretch reads YKALYYGWMF…YYQTGTYPYW (75 aa). Residues 220–240 form a helical membrane-spanning segment; it reads LYFQAASLLLSIISISWSVVV. Over 241-274 the chain is Cytoplasmic; the sequence is QNRSLRMIRDDKVNIWPHEAVLQFCWRFLTILAR. 2 helical membrane-spanning segments follow: residues 275-295 and 296-316; these read IITLVALVLIFGINVVPLISV and HLLVTLVHVIFLQAIHIDACT. A topological domain (extracellular) is located at residue His-317. The helical transmembrane segment at 318–338 threads the bilayer; sequence IEKLLLLINTFIHIFIPFNMV. The Cytoplasmic segment spans residues 339 to 353; it reads EGNTRWRYLTAYSVE. A helical membrane pass occupies residues 354 to 374; sequence FIEMMLVCWLLPLSLNTFPYI. Topologically, residues 375–378 are extracellular; it reads EKVQ. The helical transmembrane segment at 379-399 threads the bilayer; sequence VGVPISFIAGIAIMMMYYQFF. Over 400 to 458 the chain is Cytoplasmic; that stretch reads HPNRRQLIVTQSQEDLSLNVQKSVETLTPKLESSLEISGEQNTSQDLVSELLLDVEHEN.

This sequence belongs to the XK family. In terms of processing, cleavage by ced-3 activates ced-8 function in promoting phosphatidylserine exposure at the surface of apoptotic cells.

It localises to the cell membrane. The catalysed reaction is a 1,2-diacyl-sn-glycero-3-phospho-L-serine(in) = a 1,2-diacyl-sn-glycero-3-phospho-L-serine(out). Phospholipid scramblase that acts downstream of ced-9 and caspase ced-3 to promote phosphatidylserine exposure on apoptotic cell surface. Phosphatidylserine is a specific marker only present at the surface of apoptotic cells and acts as a specific signal for engulfment. Regulates apoptosis kinetics during embryonic development. Not required for engulfment of germ cell corpses. The polypeptide is Cell death abnormality protein 8 (Caenorhabditis elegans).